A 3418-amino-acid polypeptide reads, in one-letter code: Breast cancer type 2 susceptibility protein (3418 aa).

The segment at 1–40 is interaction with PALB2; the sequence is MPIGSKERPTFFEIFKTRCNKADLGPISLNWFEELSSEAP. The disordered stretch occupies residues 37 to 68; the sequence is SEAPPYNSEPAEESEHKNNNYEPNLFKTPQRK. Ser-70 carries the phosphoserine modification. The disordered stretch occupies residues 358 to 381; the sequence is VEPNDTDPLDSNVANQKPFESGSD. Residues Ser-445, Ser-492, and Ser-755 each carry the phosphoserine modification. The segment at 639–1000 is interaction with NPM1; it reads LHSSVKRSCS…NKWAGLLGPI (362 aa). BRCA2 repeat units lie at residues 1002–1036, 1212–1246, 1421–1455, 1517–1551, 1664–1698, and 1837–1871; these read NHSF…DIEE, NEVG…DIEN, FETS…QKPE, KEPT…EKEQ, IENS…EGIF, and FEVG…DSFS. The interval 1003-2082 is interaction with RAD51; sequence HSFGGSFRTA…LHKVKGVLEE (1080 aa). An interaction with POLH region spans residues 1338 to 1781; that stretch reads GSDSSKNDTV…IEPVLKNVED (444 aa). Positions 1410-1595 are required for stimulation of POLH DNA polymerization activity; the sequence is TATKTEQNIK…TAAPKCKEMQ (186 aa). The residue at position 1970 (Ser-1970) is a Phosphoserine. One copy of the BRCA2 7 repeat lies at 1971–2005; sequence SANTCGIFSTASGKSVQVSDASLQNARQVFSEIED. Phosphothreonine is present on Thr-2035. The stretch at 2051–2085 is one BRCA2 8 repeat; it reads NSSAFSGFSTASGKQVSILESSLHKVKGVLEEFDL. Ser-2095 bears the Phosphoserine mark. Positions 2270–2337 are interaction with HSF2BP; the sequence is GKRRGEPLIL…EPITCVPFRT (68 aa). The interaction with FANCD2 stretch occupies residues 2350–2545; that stretch reads TAPGQEFLSK…SHKQLYTYGV (196 aa). Residues 2430–2450 form a disordered region; the sequence is ENRQKQNIDGHGSDDSKNKIN. Residues 2481-2832 are interaction with SEM1; it reads ITSLQNARDI…QRAYPIQWME (352 aa). The Nuclear export signal; masked by interaction with SEM1 signature appears at 2682–2698; sequence AAKTLVLCVSDIISLSA. A Phosphoserine; by CDK1 and CDK2 modification is found at Ser-3291. Ser-3319 carries the phosphoserine modification. Phosphothreonine; by CHEK1 and CHEK2 is present on Thr-3387. The disordered stretch occupies residues 3393-3418; that stretch reads EQESSQASTEECEKNKQDTITTKKYI.

As to quaternary structure, monomer and dimer. Interacts with RAD51; regulates RAD51 recruitment and function at sites of DNA repair. Interacts with WDR16, USP11, DMC1, ROCK2 and NPM1. Interacts with SEM1; the interaction masks a nuclear export signal in BRCA2. Interacts with both nonubiquitinated and monoubiquitinated FANCD2; this complex also includes XRCC3 and phosphorylated FANCG. Part of a BRCA complex containing BRCA1, BRCA2 and PALB2. Component of the homologous recombination repair (HR) complex composed of ERCC5/XPG, BRCA2, PALB2, DSS1 and RAD51. Within the complex, interacts with ERCC5/XPG and PALB2. Interacts directly with PALB2 which may serve as a scaffold for a HR complex containing PALB2, BRCA2, RAD51C, RAD51 and XRCC3. Interacts with BRCA1 only in the presence of PALB2 which serves as the bridging protein. Interacts with POLH; the interaction is direct. Interacts with the TREX-2 complex subunits PCID2 and SEM1. Interacts with HSF2BP and BRME1; the interaction with HSF2BP is direct and allows the formation of a ternary complex. The complex BRME1:HSF2BP:BRCA2 interacts with SPATA22, MEIOB and RAD51. Phosphorylated by ATM upon irradiation-induced DNA damage. Phosphorylation by CHEK1 and CHEK2 regulates interaction with RAD51. Phosphorylation at Ser-3291 by CDK1 and CDK2 is low in S phase when recombination is active, but increases as cells progress towards mitosis; this phosphorylation prevents homologous recombination-dependent repair during S phase and G2 by inhibiting RAD51 binding. In terms of processing, ubiquitinated in the absence of DNA damage; this does not lead to proteasomal degradation. In contrast, ubiquitination in response to DNA damage leads to proteasomal degradation. Highest levels of expression in breast and thymus, with slightly lower levels in lung, ovary and spleen.

Its subcellular location is the nucleus. The protein localises to the cytoplasm. The protein resides in the cytoskeleton. It localises to the microtubule organizing center. It is found in the centrosome. Its function is as follows. Involved in double-strand break repair and/or homologous recombination. Binds RAD51 and potentiates recombinational DNA repair by promoting assembly of RAD51 onto single-stranded DNA (ssDNA). Acts by targeting RAD51 to ssDNA over double-stranded DNA, enabling RAD51 to displace replication protein-A (RPA) from ssDNA and stabilizing RAD51-ssDNA filaments by blocking ATP hydrolysis. Part of a PALB2-scaffolded HR complex containing RAD51C and which is thought to play a role in DNA repair by HR. May participate in S phase checkpoint activation. Binds selectively to ssDNA, and to ssDNA in tailed duplexes and replication fork structures. May play a role in the extension step after strand invasion at replication-dependent DNA double-strand breaks; together with PALB2 is involved in both POLH localization at collapsed replication forks and DNA polymerization activity. In concert with NPM1, regulates centrosome duplication. Interacts with the TREX-2 complex (transcription and export complex 2) subunits PCID2 and SEM1, and is required to prevent R-loop-associated DNA damage and thus transcription-associated genomic instability. Silencing of BRCA2 promotes R-loop accumulation at actively transcribed genes in replicating and non-replicating cells, suggesting that BRCA2 mediates the control of R-loop associated genomic instability, independently of its known role in homologous recombination. The protein is Breast cancer type 2 susceptibility protein of Homo sapiens (Human).